The sequence spans 748 residues: LPS-assembly protein LptD (748 aa).

Residues 1–19 (MSKTWGILMLSVLSAPSLA) form the signal peptide.

Belongs to the LptD family. In terms of assembly, component of the lipopolysaccharide transport and assembly complex. Interacts with LptE and LptA.

It is found in the cell outer membrane. Together with LptE, is involved in the assembly of lipopolysaccharide (LPS) at the surface of the outer membrane. In Pseudoalteromonas translucida (strain TAC 125), this protein is LPS-assembly protein LptD.